The following is a 916-amino-acid chain: Protein translocase subunit SecA (916 aa).

Residues Gln-87, 105 to 109 (GEGKT), and Asp-512 each bind ATP. The segment at 857–916 (QHAEAPSMEQAVAGEDEELPEGPAPVVPLEPVRNEQKIGRNEPCPCGSGKKYKHCHGQLD) is disordered. Zn(2+) is bound by residues Cys-900, Cys-902, Cys-911, and His-912. Over residues 906–916 (KKYKHCHGQLD) the composition is skewed to basic residues.

Belongs to the SecA family. As to quaternary structure, monomer and homodimer. Part of the essential Sec protein translocation apparatus which comprises SecA, SecYEG and auxiliary proteins SecDF-YajC and YidC. It depends on Zn(2+) as a cofactor.

Its subcellular location is the cell inner membrane. The protein localises to the cytoplasm. The enzyme catalyses ATP + H2O + cellular proteinSide 1 = ADP + phosphate + cellular proteinSide 2.. Part of the Sec protein translocase complex. Interacts with the SecYEG preprotein conducting channel. Has a central role in coupling the hydrolysis of ATP to the transfer of proteins into and across the cell membrane, serving both as a receptor for the preprotein-SecB complex and as an ATP-driven molecular motor driving the stepwise translocation of polypeptide chains across the membrane. This chain is Protein translocase subunit SecA, found in Pseudomonas paraeruginosa (strain DSM 24068 / PA7) (Pseudomonas aeruginosa (strain PA7)).